Consider the following 438-residue polypeptide: MYLIADWRRTHYSEEVIPEMDGQEVILMGWVHSIRALGKLAFVILRDREGTIQAVVPKQKVDEETFEIAKKLGKEDIIAIRGKVVANEKAPKGFEVIPIEIRVLNKADAPLPLDPSEKVPAEIDTRLDKRFLDIRRPKIQAIFKIRSEMLRSIRKTFADEGFVEVNTPKLVASATEGGTELFPISYFEKEAFLGQSPQLYKQMMMAGGFDKVFEIAQIFRAEEHNTRRHLNEAVSIDTEMSFVNEKDAMAMLEKVVYNCYADIEYNRPQEIELLELNWEIPEKTFDKLTYTEAIDIAISKGVEIEWGEDLSRAAERAVGDEMGGLYFITEWPTQTRPFYTLPHENDNKVCKAFDLMYKELEISSGAQRVHKYDLLVENISNMGMNPDSFETYLEAFKFGMPPHAGWGLGADRFAMVLTAQDNIRECVLFPRDRQRLTP.

An L-aspartate-binding site is contributed by E176. Residues 198–201 (QLYK) form an aspartate region. R220 is an L-aspartate binding site. ATP-binding positions include 220–222 (RAE), 228–230 (RHL), and E361. Residues E361 and S364 each coordinate Mg(2+). Residues S364 and R368 each coordinate L-aspartate. 409–412 (GADR) serves as a coordination point for ATP.

The protein belongs to the class-II aminoacyl-tRNA synthetase family. Type 2 subfamily. In terms of assembly, homodimer. It depends on Mg(2+) as a cofactor.

Its subcellular location is the cytoplasm. It carries out the reaction tRNA(Asx) + L-aspartate + ATP = L-aspartyl-tRNA(Asx) + AMP + diphosphate. Aspartyl-tRNA synthetase with relaxed tRNA specificity since it is able to aspartylate not only its cognate tRNA(Asp) but also tRNA(Asn). Reaction proceeds in two steps: L-aspartate is first activated by ATP to form Asp-AMP and then transferred to the acceptor end of tRNA(Asp/Asn). The sequence is that of Aspartate--tRNA(Asp/Asn) ligase from Methanococcus maripaludis (strain C7 / ATCC BAA-1331).